We begin with the raw amino-acid sequence, 502 residues long: Mannitol 2-dehydrogenase (502 aa).

37–48 (IVHIGVGGFHRA) contributes to the NAD(+) binding site.

Belongs to the mannitol dehydrogenase family. Monomer.

It carries out the reaction D-mannitol + NAD(+) = D-fructose + NADH + H(+). In terms of biological role, catalyzes the NAD(H)-dependent interconversion of D-fructose and D-mannitol in the mannitol metabolic pathway. The polypeptide is Mannitol 2-dehydrogenase (Emericella nidulans (strain FGSC A4 / ATCC 38163 / CBS 112.46 / NRRL 194 / M139) (Aspergillus nidulans)).